A 225-amino-acid chain; its full sequence is Uracil-DNA glycosylase (225 aa).

Residue D65 is the Proton acceptor of the active site.

Belongs to the uracil-DNA glycosylase (UDG) superfamily. UNG family.

It is found in the cytoplasm. It catalyses the reaction Hydrolyzes single-stranded DNA or mismatched double-stranded DNA and polynucleotides, releasing free uracil.. Functionally, excises uracil residues from the DNA which can arise as a result of misincorporation of dUMP residues by DNA polymerase or due to deamination of cytosine. The sequence is that of Uracil-DNA glycosylase from Lysinibacillus sphaericus (strain C3-41).